Here is a 97-residue protein sequence, read N- to C-terminus: UPF0223 protein lp_2149 (97 aa).

Belongs to the UPF0223 family.

In Lactiplantibacillus plantarum (strain ATCC BAA-793 / NCIMB 8826 / WCFS1) (Lactobacillus plantarum), this protein is UPF0223 protein lp_2149.